The primary structure comprises 511 residues: GMP synthase [glutamine-hydrolyzing] (511 aa).

In terms of domain architecture, Glutamine amidotransferase type-1 spans 6 to 196 (LVLVLDFGSQ…VFDVCGCTGD (191 aa)). Cys83 functions as the Nucleophile in the catalytic mechanism. Residues His170 and Glu172 contribute to the active site. The region spanning 197 to 386 (WSIENFIDME…LGVPDRIVWR (190 aa)) is the GMPS ATP-PPase domain. 224 to 230 (SGGVDSS) serves as a coordination point for ATP.

As to quaternary structure, homodimer.

The catalysed reaction is XMP + L-glutamine + ATP + H2O = GMP + L-glutamate + AMP + diphosphate + 2 H(+). Its pathway is purine metabolism; GMP biosynthesis; GMP from XMP (L-Gln route): step 1/1. Catalyzes the synthesis of GMP from XMP. The chain is GMP synthase [glutamine-hydrolyzing] from Oceanobacillus iheyensis (strain DSM 14371 / CIP 107618 / JCM 11309 / KCTC 3954 / HTE831).